The chain runs to 446 residues: O-antigen polymerase (446 aa).

11 helical membrane passes run 11–31 (ICSYTFFMVNLFILILSVINE), 33–53 (FCEIAYVIISVSSVLFCVIII), 58–78 (QGGFLNPMTFCIISVFFFILI), 104–124 (IYVFYSLAVVNIPLAFTVLLY), 147–167 (QLSMILLWGGLFSAIFLIKSY), 186–206 (LYDELFWFTLSKYCYILSLLF), 211–231 (NFILYSLLIFITSIGYILVGL), 252–272 (LKIKWLLLVAILVTTISSLFL), 355–375 (IYLGWIIGSVALLLFAFSLAF), 391–411 (KLAYTYRLIIFLALPNLIYFA), and 415–435 (LFDFITKVLFIALFIGGLSIV).

Its subcellular location is the cell inner membrane. It carries out the reaction n lipid-linked O-antigen repeat units = a lipid-linked O antigen + (n-1) polyisoprenyl diphosphate.. It participates in bacterial outer membrane biogenesis; LPS O-antigen biosynthesis. Polymerase involved in the biosynthesis of the lipopolysaccharide (LPS). Catalyzes the polymerization of the O-antigen repeat units on the periplasmic face of the inner membrane, leading to the formation of the lipid-linked O-antigen molecule. In vitro, shows a preference for bacteria-based, undecaprenyl-containing substrates rather than eukaryote-based, dolichol-containing substrates. This chain is O-antigen polymerase, found in Escherichia coli.